The chain runs to 471 residues: 3-isopropylmalate dehydratase large subunit (471 aa).

3 residues coordinate [4Fe-4S] cluster: Cys-351, Cys-412, and Cys-415.

It belongs to the aconitase/IPM isomerase family. LeuC type 1 subfamily. Heterodimer of LeuC and LeuD. It depends on [4Fe-4S] cluster as a cofactor.

It carries out the reaction (2R,3S)-3-isopropylmalate = (2S)-2-isopropylmalate. Its pathway is amino-acid biosynthesis; L-leucine biosynthesis; L-leucine from 3-methyl-2-oxobutanoate: step 2/4. In terms of biological role, catalyzes the isomerization between 2-isopropylmalate and 3-isopropylmalate, via the formation of 2-isopropylmaleate. This is 3-isopropylmalate dehydratase large subunit from Hahella chejuensis (strain KCTC 2396).